We begin with the raw amino-acid sequence, 175 residues long: Large ribosomal subunit protein uL10 (175 aa).

It belongs to the universal ribosomal protein uL10 family. As to quaternary structure, part of the ribosomal stalk of the 50S ribosomal subunit. The N-terminus interacts with L11 and the large rRNA to form the base of the stalk. The C-terminus forms an elongated spine to which L12 dimers bind in a sequential fashion forming a multimeric L10(L12)X complex.

Forms part of the ribosomal stalk, playing a central role in the interaction of the ribosome with GTP-bound translation factors. This Prochlorococcus marinus (strain SARG / CCMP1375 / SS120) protein is Large ribosomal subunit protein uL10.